We begin with the raw amino-acid sequence, 195 residues long: Large ribosomal subunit protein uL18 (195 aa).

Belongs to the universal ribosomal protein uL18 family. In terms of assembly, part of the 50S ribosomal subunit. Contacts the 5S and 23S rRNAs.

In terms of biological role, this is one of the proteins that bind and probably mediate the attachment of the 5S RNA into the large ribosomal subunit, where it forms part of the central protuberance. In Metallosphaera sedula (strain ATCC 51363 / DSM 5348 / JCM 9185 / NBRC 15509 / TH2), this protein is Large ribosomal subunit protein uL18.